A 592-amino-acid polypeptide reads, in one-letter code: MTAEDAAAAMSSDSAAGGAASAKAPEGVAGAPNEAALLALLARTGYRMVQENGQRKYGGPPPGWEGPHPQRGCEVFVGKIPRDVYEDELVPVFEAVGRIYELRLMMDFDGKNRGYAFVTYCHKGEAKRAVRELNNHEIRPGRLLGVCCSVDNCRLFIGGIPKMKKREEILEEIAKVTEGVLDVIVYASAADKMKNRGFAFVEYESHRAAAMARRKLMPGRIQLWGHQIAVDWAEPEIDVDEDVMETVKILYVRNLMIETTEDTIKKSFGQFNPGCVERVKKIRDYAFVHFASREDAVLAMNSLNGTELEGSCLEVTLAKPVDKEQYSRYQKAAKGGGAAEAAAPQPGYVYSCDPYTLAYYGYPYNALIGPNRDYFVKAGSIRGRGRGAAGSRAPGPRGSYLGGYSAGRGIYSRYHEGKGKQQEKGYELVPNLEISAVNPVAIKPGTVAIPAIGAQYSMFQAAPAPKMIEDGKIHTMEHMISPIAVQPDPASAAAAAAAAAAAVIPAVSTPPPFQGRPITPVYTVAPNVQRIPAAGLYGAGYVPFAAPATATLATLQKNAAAAAVYGGYAGYIPQAFPAATIQVPIHDVYPTY.

Low complexity predominate over residues 1–24; the sequence is MTAEDAAAAMSSDSAAGGAASAKA. Residues 1–26 are disordered; that stretch reads MTAEDAAAAMSSDSAAGGAASAKAPE. RRM domains are found at residues 73–151, 153–235, and 248–320; these read CEVF…CSVD, CRLF…WAEP, and KILY…LAKP. 2 positions are modified to asymmetric dimethylarginine; alternate: Arg397 and Arg408. An omega-N-methylarginine; alternate mark is found at Arg397 and Arg408.

This sequence belongs to the RRM RBM47 family. As to quaternary structure, homodimer. Interacts with A1CF. Interacts with APOBEC1; form an mRNA editing complex. Interacts with RBPMS.

It is found in the nucleus. The protein resides in the cytoplasm. Its function is as follows. Single-stranded RNA-binding protein that functions in a variety of RNA processes, including alternative splicing, RNA stabilization, and RNA editing. Functions as an enzyme-substrate adapter for the cytidine deaminase APOBEC1. With APOBEC1 forms an mRNA editing complex involved into cytidine to uridine editing of a variety of mRNA molecules. Through the binding of their 3'UTR, also stabilizes a variety of mRNAs and regulates the expression of genes such as the interferon alpha/beta receptor and interleukin-10. Also involved in the alternative splicing of several genes including TJP1. Binds the pre-mRNA (U)GCAUG consensus sequences in downstream intronic regions of alternative exons, regulating their exclusion and inclusion into mRNAs. Independently of its RNA-binding activity, could negatively regulate MAVS by promoting its lysosomal degradation. This chain is RNA-binding protein 47, found in Canis lupus familiaris (Dog).